The sequence spans 672 residues: 2,4-dienoyl-CoA reductase [(2E)-enoyl-CoA-producing] (672 aa).

FMN-binding positions include 25 to 27 (SMH), Gly-59, and Gln-101. Tyr-167 functions as the Proton donor in the catalytic mechanism. Arg-176 contacts substrate. An FMN-binding site is contributed by Arg-215. 253–256 (HEAR) provides a ligand contact to substrate. FMN is bound by residues Arg-289 and 311–312 (AR). [4Fe-4S] cluster contacts are provided by Cys-335 and Cys-338. Residue Gln-340 participates in FAD binding. Gln-340 provides a ligand contact to NADP(+). Positions 342 and 354 each coordinate [4Fe-4S] cluster. 5 residues coordinate FAD: Ala-385, Asp-404, Gln-412, Lys-422, and Val-449. 563–564 (RK) provides a ligand contact to NADP(+). The substrate site is built by Lys-567 and Trp-578. FAD is bound by residues Gly-649 and 656–658 (LDA). An NADP(+)-binding site is contributed by 654 to 656 (MEL).

It in the N-terminal section; belongs to the NADH:flavin oxidoreductase/NADH oxidase family. Monomer. Requires FMN as cofactor. FAD serves as cofactor. It depends on [4Fe-4S] cluster as a cofactor.

It carries out the reaction a 4,5-saturated-(2E)-enoyl-CoA + NADP(+) = a (2E,4E)-dienoyl-CoA + NADPH + H(+). It catalyses the reaction a (2E,4Z)-dienoyl-CoA + NADPH + H(+) = a 4,5-saturated-(2E)-enoyl-CoA + NADP(+). The catalysed reaction is (2E)-decenoyl-CoA + NADP(+) = (2E,4E)-decadienoyl-CoA + NADPH + H(+). The enzyme catalyses (2E)-decenoyl-CoA + NADP(+) = (2E,4Z)-decadienoyl-CoA + NADPH + H(+). It functions in the pathway lipid metabolism; fatty acid beta-oxidation. Its activity is regulated as follows. Is non-competitively inhibited by NADH. In terms of biological role, functions as an auxiliary enzyme in the beta-oxidation of unsaturated fatty acids with double bonds at even carbon positions. Catalyzes the NADPH-dependent reduction of the C4-C5 double bond of the acyl chain of 2,4-dienoyl-CoA to yield 2-trans-enoyl-CoA. Acts on both isomers, 2-trans,4-cis- and 2-trans,4-trans-decadienoyl-CoA, with almost equal efficiency. Is not active with NADH instead of NADPH. Does not show cis-&gt;trans isomerase activity. The polypeptide is 2,4-dienoyl-CoA reductase [(2E)-enoyl-CoA-producing] (Escherichia coli (strain K12)).